Reading from the N-terminus, the 431-residue chain is Histidine--tRNA ligase (431 aa).

The protein belongs to the class-II aminoacyl-tRNA synthetase family.

Its subcellular location is the cytoplasm. It carries out the reaction tRNA(His) + L-histidine + ATP = L-histidyl-tRNA(His) + AMP + diphosphate + H(+). This is Histidine--tRNA ligase (hisS) from Pyrococcus abyssi (strain GE5 / Orsay).